A 269-amino-acid polypeptide reads, in one-letter code: Flagellar brake protein YcgR (269 aa).

In terms of domain architecture, PilZ spans 134-254 (QRRNFYRVTT…SRLLIQRYIT (121 aa)).

The protein belongs to the YcgR family. Monomer. Interacts with the flagellar basal bodies.

It is found in the bacterial flagellum basal body. Acts as a flagellar brake, regulating swimming and swarming in a bis-(3'-5') cyclic diguanylic acid (c-di-GMP)-dependent manner. Binds 1 c-di-GMP dimer per subunit. Increasing levels of c-di-GMP lead to decreased motility. This chain is Flagellar brake protein YcgR, found in Nitrosomonas eutropha (strain DSM 101675 / C91 / Nm57).